A 232-amino-acid polypeptide reads, in one-letter code: Large ribosomal subunit protein uL1 (232 aa).

The protein belongs to the universal ribosomal protein uL1 family. In terms of assembly, part of the 50S ribosomal subunit.

Its function is as follows. Binds directly to 23S rRNA. The L1 stalk is quite mobile in the ribosome, and is involved in E site tRNA release. Functionally, protein L1 is also a translational repressor protein, it controls the translation of the L11 operon by binding to its mRNA. In Dichelobacter nodosus (strain VCS1703A), this protein is Large ribosomal subunit protein uL1.